A 394-amino-acid chain; its full sequence is MNTMRPRHLNQRGKPVSRPISLYDKWLIGAVFGLLIIGLMMVASSSVMISTKYFHQPFHFLIRQACYLFVGLLLALIVVRTDSSFWEKISMPMMIGCVFLLLIVLIPGIGKSVNGSRRWLALGPIGVQVSELTKLAMIFYLSGYLVRQQEAVCESIFGFIKPMAILAVVSVLLLLEPDFGATVVISGTVMAMLFLAGVKLRYYFGLMLVVVTALALLAVSSPYRVARLTAFLDPWADQYNSGYQLTQSLIAFGRGGWFGTGLGESIQKLLYLPEAHTDFLFAVIAEELGLFGILVVITLYSILVIRGLNIGYTAYTQERHFASYTAYGLTIWLALQASINMGVNAGLLPTKGLTLPLLSYGGASMVINCIVIALLLRIDHENRWQSLGLRPLTA.

Residues 1–26 lie on the Cytoplasmic side of the membrane; that stretch reads MNTMRPRHLNQRGKPVSRPISLYDKW. The chain crosses the membrane as a helical span at residues 27-47; sequence LIGAVFGLLIIGLMMVASSSV. Residues 48 to 57 lie on the Periplasmic side of the membrane; the sequence is MISTKYFHQP. A helical membrane pass occupies residues 58–78; sequence FHFLIRQACYLFVGLLLALIV. The Cytoplasmic portion of the chain corresponds to 79–88; sequence VRTDSSFWEK. A helical membrane pass occupies residues 89–109; sequence ISMPMMIGCVFLLLIVLIPGI. Topologically, residues 110-118 are periplasmic; sequence GKSVNGSRR. The chain crosses the membrane as a helical span at residues 119–139; the sequence is WLALGPIGVQVSELTKLAMIF. The Cytoplasmic portion of the chain corresponds to 140–154; that stretch reads YLSGYLVRQQEAVCE. Residues 155–175 form a helical membrane-spanning segment; sequence SIFGFIKPMAILAVVSVLLLL. Residues 176–177 lie on the Periplasmic side of the membrane; sequence EP. A helical transmembrane segment spans residues 178 to 198; the sequence is DFGATVVISGTVMAMLFLAGV. The Cytoplasmic segment spans residues 199-201; it reads KLR. The chain crosses the membrane as a helical span at residues 202–222; it reads YYFGLMLVVVTALALLAVSSP. The Periplasmic portion of the chain corresponds to 223–278; the sequence is YRVARLTAFLDPWADQYNSGYQLTQSLIAFGRGGWFGTGLGESIQKLLYLPEAHTD. The chain crosses the membrane as a helical span at residues 279-299; the sequence is FLFAVIAEELGLFGILVVITL. Over 300–327 the chain is Cytoplasmic; it reads YSILVIRGLNIGYTAYTQERHFASYTAY. The chain crosses the membrane as a helical span at residues 328 to 348; it reads GLTIWLALQASINMGVNAGLL. Residues 349 to 354 are Periplasmic-facing; sequence PTKGLT. Residues 355 to 375 form a helical membrane-spanning segment; the sequence is LPLLSYGGASMVINCIVIALL. Residues 376–394 are Cytoplasmic-facing; that stretch reads LRIDHENRWQSLGLRPLTA.

It belongs to the SEDS family. FtsW subfamily.

The protein resides in the cell inner membrane. It carries out the reaction [GlcNAc-(1-&gt;4)-Mur2Ac(oyl-L-Ala-gamma-D-Glu-L-Lys-D-Ala-D-Ala)](n)-di-trans,octa-cis-undecaprenyl diphosphate + beta-D-GlcNAc-(1-&gt;4)-Mur2Ac(oyl-L-Ala-gamma-D-Glu-L-Lys-D-Ala-D-Ala)-di-trans,octa-cis-undecaprenyl diphosphate = [GlcNAc-(1-&gt;4)-Mur2Ac(oyl-L-Ala-gamma-D-Glu-L-Lys-D-Ala-D-Ala)](n+1)-di-trans,octa-cis-undecaprenyl diphosphate + di-trans,octa-cis-undecaprenyl diphosphate + H(+). Its pathway is cell wall biogenesis; peptidoglycan biosynthesis. Functionally, peptidoglycan polymerase that is essential for cell division. The chain is Probable peptidoglycan glycosyltransferase FtsW from Legionella pneumophila subsp. pneumophila (strain Philadelphia 1 / ATCC 33152 / DSM 7513).